The sequence spans 503 residues: Probable inactive beta-glucosidase 33 (503 aa).

The N-terminal stretch at M1–A30 is a signal peptide. A beta-D-glucoside contacts are provided by residues Q50, H150, and N195–Q196. C215 and C223 are joined by a disulfide. N222 is a glycosylation site (N-linked (GlcNAc...) asparagine). Residues Y339 and E399 each coordinate a beta-D-glucoside. The active-site Nucleophile is E399. N-linked (GlcNAc...) asparagine glycosylation occurs at N436. A beta-D-glucoside-binding positions include W446, E453 to F454, and F462.

Belongs to the glycosyl hydrolase 1 family.

The chain is Probable inactive beta-glucosidase 33 (BGLU33) from Oryza sativa subsp. japonica (Rice).